A 123-amino-acid chain; its full sequence is Putative iron-sulfur cluster insertion protein ErpA (123 aa).

Positions 51, 115, and 117 each coordinate iron-sulfur cluster.

The protein belongs to the HesB/IscA family. Homodimer. Requires iron-sulfur cluster as cofactor.

Functionally, required for insertion of 4Fe-4S clusters. The protein is Putative iron-sulfur cluster insertion protein ErpA of Burkholderia multivorans (strain ATCC 17616 / 249).